The following is a 270-amino-acid chain: MSDQQQPPVYKIALGIEYDGSRYYGWQRQNEVRSVQEKLEKALSQVANEPITVFCAGRTDAGVHGTGQVVHFETTAQRKDAAWTLGVNANLPGDIAVRWVKAVPDDFHARFSATARRYRYIIYNHRLRPAVLSKGVTHFYEPLDAERMHRAAQCLLGENDFTSFRAVQCQSRTPWRNVMHINVTRHGPYVVVDIKANAFVHHMVRNIVGSLMEVGAHNQPESWIAELLAAKDRTLAAATAKAEGLYLVAVDYPDRYDLPKPPMGPLFLAD.

The active-site Nucleophile is the D60. Residues 107-111 (FHARF) form an RNA binding region. Y118 is a binding site for substrate. The interval 168-172 (QCQSR) is interaction with tRNA.

Belongs to the tRNA pseudouridine synthase TruA family. As to quaternary structure, homodimer.

It carries out the reaction uridine(38/39/40) in tRNA = pseudouridine(38/39/40) in tRNA. Functionally, formation of pseudouridine at positions 38, 39 and 40 in the anticodon stem and loop of transfer RNAs. This chain is tRNA pseudouridine synthase A, found in Escherichia coli O139:H28 (strain E24377A / ETEC).